The sequence spans 440 residues: Chromosome partition protein MukF (440 aa).

The segment at 208-236 (LDETSGNLRELQDTLNAAGDKLQSQLLRI) is leucine-zipper.

This sequence belongs to the MukF family. As to quaternary structure, interacts, and probably forms a ternary complex, with MukE and MukB via its C-terminal region. The complex formation is stimulated by calcium or magnesium. It is required for an interaction between MukE and MukB.

The protein localises to the cytoplasm. Its subcellular location is the nucleoid. Involved in chromosome condensation, segregation and cell cycle progression. May participate in facilitating chromosome segregation by condensation DNA from both sides of a centrally located replisome during cell division. Not required for mini-F plasmid partitioning. Probably acts via its interaction with MukB and MukE. Overexpression results in anucleate cells. It has a calcium binding activity. The chain is Chromosome partition protein MukF from Histophilus somni (strain 129Pt) (Haemophilus somnus).